The chain runs to 91 residues: Large ribosomal subunit protein eL43 (91 aa).

The C4-type zinc finger occupies 39 to 60 (CSFCGKEAMKRKATGIWNCAKC).

The protein belongs to the eukaryotic ribosomal protein eL43 family.

The protein is Large ribosomal subunit protein eL43 of Caenorhabditis elegans.